We begin with the raw amino-acid sequence, 344 residues long: Tryptophan--tRNA ligase (344 aa).

ATP is bound by residues 20 to 22 and 28 to 29; these read QPS and GN. A 'HIGH' region motif is present at residues 21 to 29; that stretch reads PSGALHLGN. Aspartate 144 is a binding site for L-tryptophan. ATP is bound by residues 156–158, valine 197, and 206–210; these read GED and KMSKS. The short motif at 206–210 is the 'KMSKS' region element; the sequence is KMSKS.

It belongs to the class-I aminoacyl-tRNA synthetase family. Homodimer.

Its subcellular location is the cytoplasm. The catalysed reaction is tRNA(Trp) + L-tryptophan + ATP = L-tryptophyl-tRNA(Trp) + AMP + diphosphate + H(+). Its function is as follows. Catalyzes the attachment of tryptophan to tRNA(Trp). The polypeptide is Tryptophan--tRNA ligase (Caulobacter vibrioides (strain ATCC 19089 / CIP 103742 / CB 15) (Caulobacter crescentus)).